Here is a 548-residue protein sequence, read N- to C-terminus: Chaperonin GroEL (548 aa).

Residues Thr-30 to Pro-33, Lys-51, Asp-87 to Thr-91, Gly-415, Asn-478 to Ala-480, and Asp-494 each bind ATP.

Belongs to the chaperonin (HSP60) family. In terms of assembly, forms a cylinder of 14 subunits composed of two heptameric rings stacked back-to-back. Interacts with the co-chaperonin GroES.

It is found in the cytoplasm. It catalyses the reaction ATP + H2O + a folded polypeptide = ADP + phosphate + an unfolded polypeptide.. In terms of biological role, together with its co-chaperonin GroES, plays an essential role in assisting protein folding. The GroEL-GroES system forms a nano-cage that allows encapsulation of the non-native substrate proteins and provides a physical environment optimized to promote and accelerate protein folding. The chain is Chaperonin GroEL from Janthinobacterium sp. (strain Marseille) (Minibacterium massiliensis).